The following is a 198-amino-acid chain: Chromophore lyase CpcS/CpeS 2 (198 aa).

It belongs to the CpcS/CpeS biliprotein lyase family.

The protein resides in the plastid. The protein localises to the organellar chromatophore. Functionally, covalently attaches a chromophore to Cys residue(s) of phycobiliproteins. The sequence is that of Chromophore lyase CpcS/CpeS 2 from Paulinella chromatophora.